A 254-amino-acid chain; its full sequence is Alcohol dehydrogenase 2 (254 aa).

An NAD(+)-binding site is contributed by 10–33 (FVAGLGGIGFDTSREIVKSGPKNL). Position 138 (Ser-138) interacts with substrate. Tyr-151 functions as the Proton acceptor in the catalytic mechanism.

The protein belongs to the short-chain dehydrogenases/reductases (SDR) family. In terms of assembly, homodimer.

The catalysed reaction is a primary alcohol + NAD(+) = an aldehyde + NADH + H(+). It catalyses the reaction a secondary alcohol + NAD(+) = a ketone + NADH + H(+). In Drosophila buzzatii (Fruit fly), this protein is Alcohol dehydrogenase 2 (Adh2).